We begin with the raw amino-acid sequence, 585 residues long: ADP-ribosylation factor-binding protein GGA2 (585 aa).

One can recognise a VHS domain in the interval 33–169 (ACRMSLAEPD…LLKYKGYAFP (137 aa)). Residues lysine 180 and lysine 287 each participate in a glycyl lysine isopeptide (Lys-Gly) (interchain with G-Cter in ubiquitin) cross-link. The 126-residue stretch at 196-321 (EIAQAAKLEE…LLEKFNLLKN (126 aa)) folds into the GAT domain. The tract at residues 358-378 (LDEAPSQGNNNTNGTGTPAAA) is disordered. Residues 365–374 (GNNNTNGTGT) show a composition bias toward low complexity. The GAE domain occupies 466 to 581 (TTTAPARTLV…TQAEETAVFT (116 aa)).

In terms of assembly, binds to ARF1 and ARF2.

It is found in the golgi apparatus. The protein resides in the trans-Golgi network. Its function is as follows. May play a role in the regulation of membrane traffic through the trans-Golgi network. The protein is ADP-ribosylation factor-binding protein GGA2 (GGA2) of Saccharomyces cerevisiae (strain ATCC 204508 / S288c) (Baker's yeast).